We begin with the raw amino-acid sequence, 111 residues long: Dynein light chain Tctex-type (111 aa).

It belongs to the dynein light chain Tctex-type family.

The protein resides in the cytoplasm. It is found in the cytoskeleton. Its function is as follows. Acts as a non-catalytic accessory component of a dynein complex. The protein is Dynein light chain Tctex-type (dlc1) of Schizosaccharomyces pombe (strain 972 / ATCC 24843) (Fission yeast).